Reading from the N-terminus, the 119-residue chain is Large ribosomal subunit protein uL18 (119 aa).

The protein belongs to the universal ribosomal protein uL18 family. As to quaternary structure, part of the 50S ribosomal subunit; part of the 5S rRNA/L5/L18/L25 subcomplex. Contacts the 5S and 23S rRNAs.

Its function is as follows. This is one of the proteins that bind and probably mediate the attachment of the 5S RNA into the large ribosomal subunit, where it forms part of the central protuberance. The polypeptide is Large ribosomal subunit protein uL18 (Endomicrobium trichonymphae).